A 652-amino-acid polypeptide reads, in one-letter code: Acetyl-coenzyme A synthetase (652 aa).

CoA contacts are provided by residues 189–192 (RGGK), Thr-311, and Asn-335. ATP-binding positions include 387–389 (GEP), 411–416 (DTWWQT), Asp-500, and Arg-515. Ser-523 provides a ligand contact to CoA. Residue Arg-526 coordinates ATP. Residues Val-537, His-539, and Val-542 each contribute to the Mg(2+) site. Arg-584 contributes to the CoA binding site. Lys-609 carries the N6-acetyllysine modification.

The protein belongs to the ATP-dependent AMP-binding enzyme family. Mg(2+) serves as cofactor. Acetylated. Deacetylation by the SIR2-homolog deacetylase activates the enzyme.

The catalysed reaction is acetate + ATP + CoA = acetyl-CoA + AMP + diphosphate. Functionally, catalyzes the conversion of acetate into acetyl-CoA (AcCoA), an essential intermediate at the junction of anabolic and catabolic pathways. AcsA undergoes a two-step reaction. In the first half reaction, AcsA combines acetate with ATP to form acetyl-adenylate (AcAMP) intermediate. In the second half reaction, it can then transfer the acetyl group from AcAMP to the sulfhydryl group of CoA, forming the product AcCoA. This Rhizobium rhizogenes (strain K84 / ATCC BAA-868) (Agrobacterium radiobacter) protein is Acetyl-coenzyme A synthetase.